A 535-amino-acid polypeptide reads, in one-letter code: CTP synthase (535 aa).

The tract at residues 1 to 267 is amidoligase domain; the sequence is MTKYIFVTGG…DQIVLDHFGV (267 aa). Serine 13 lines the CTP pocket. Serine 13 is a UTP binding site. An ATP-binding site is contributed by 14–19; it reads SLGKGI. L-glutamine is bound at residue tyrosine 54. Aspartate 71 lines the ATP pocket. Residues aspartate 71 and glutamate 141 each contribute to the Mg(2+) site. Residues 148–150, 188–193, and lysine 224 each bind CTP; these read DIE and KTKPTQ. Residues 188-193 and lysine 224 each bind UTP; that span reads KTKPTQ. The 244-residue stretch at 292-535 folds into the Glutamine amidotransferase type-1 domain; the sequence is KIALVGKYVA…VAAASREVKD (244 aa). Glycine 354 provides a ligand contact to L-glutamine. Cysteine 381 functions as the Nucleophile; for glutamine hydrolysis in the catalytic mechanism. Residues 382 to 385, glutamate 405, and arginine 463 each bind L-glutamine; that span reads LGMQ. Catalysis depends on residues histidine 508 and glutamate 510.

Belongs to the CTP synthase family. In terms of assembly, homotetramer.

The catalysed reaction is UTP + L-glutamine + ATP + H2O = CTP + L-glutamate + ADP + phosphate + 2 H(+). It carries out the reaction L-glutamine + H2O = L-glutamate + NH4(+). The enzyme catalyses UTP + NH4(+) + ATP = CTP + ADP + phosphate + 2 H(+). It functions in the pathway pyrimidine metabolism; CTP biosynthesis via de novo pathway; CTP from UDP: step 2/2. Allosterically activated by GTP, when glutamine is the substrate; GTP has no effect on the reaction when ammonia is the substrate. The allosteric effector GTP functions by stabilizing the protein conformation that binds the tetrahedral intermediate(s) formed during glutamine hydrolysis. Inhibited by the product CTP, via allosteric rather than competitive inhibition. Catalyzes the ATP-dependent amination of UTP to CTP with either L-glutamine or ammonia as the source of nitrogen. Regulates intracellular CTP levels through interactions with the four ribonucleotide triphosphates. The chain is CTP synthase from Levilactobacillus brevis (strain ATCC 367 / BCRC 12310 / CIP 105137 / JCM 1170 / LMG 11437 / NCIMB 947 / NCTC 947) (Lactobacillus brevis).